Here is an 874-residue protein sequence, read N- to C-terminus: Probable cation-transporting P-type ATPase (874 aa).

At 1-41 the chain is on the cytoplasmic side; the sequence is MNSWTGLSEQAAIKSRQEHGANFLPEKKATPFWLLFLQQFK. The chain crosses the membrane as a helical span at residues 42 to 62; it reads SLVVILLLLASLLSFVVAIVS. Over 63–79 the chain is Extracellular; the sequence is GLRSNWNFNHDLIIEWV. The chain crosses the membrane as a helical span at residues 80 to 100; that stretch reads QPFIILLTVFANSLIGSIQEF. Residues 101–237 are Cytoplasmic-facing; the sequence is KAQKSASALK…TKLSPLQQKL (137 aa). The helical transmembrane segment at 238-257 threads the bilayer; that stretch reads EKIGKWFSWFGLGLFAVVFL. The Extracellular segment spans residues 258 to 275; sequence VQTALLGFDNFTNNWSIA. Residues 276–293 traverse the membrane as a helical segment; it reads LIGAIALVVAIIPEGLVT. Over 294–644 the chain is Cytoplasmic; that stretch reads FINVIFALSV…EEGRKTFLTC (351 aa). Catalysis depends on aspartate 331, which acts as the 4-aspartylphosphate intermediate. Aspartate 589 and aspartate 593 together coordinate Mg(2+). Residues 645–664 form a helical membrane-spanning segment; that stretch reads KRVLLNLFLTSIAGTVVVLL. Over 665–687 the chain is Extracellular; sequence GLFILGQVFKTNLLQQGHDFQVF. A helical transmembrane segment spans residues 688 to 708; it reads SPTQLLIINLFVHGFPAVALA. Over 709 to 726 the chain is Cytoplasmic; sequence VQPVKEKLMVGSFSTKNL. The chain crosses the membrane as a helical span at residues 727 to 749; sequence FYNRQGFDLIWQSLFLSFLTLLF. Residues 750–770 are Extracellular-facing; it reads YSLGIIYAINNRDLQTSGDLI. Residues 771–790 form a helical membrane-spanning segment; it reads NRAGSTCGFFILGASAALNS. Residues 791–803 lie on the Cytoplasmic side of the membrane; sequence LNLMVDKPLLMTN. The chain crosses the membrane as a helical span at residues 804–826; that stretch reads PWFFKLVWIGSLASILVFLLIIF. At 827–844 the chain is on the extracellular side; it reads INPLGLVFNVLQDLTNHP. Residues 845-865 traverse the membrane as a helical segment; the sequence is VLISYSFGGVILYMGMNEVVK. The Cytoplasmic portion of the chain corresponds to 866-874; sequence LIRLGYGNI.

The protein belongs to the cation transport ATPase (P-type) (TC 3.A.3) family. Type II subfamily.

Its subcellular location is the cell membrane. It catalyses the reaction ATP + H2O = ADP + phosphate + H(+). In terms of biological role, could mediate calcium influx. This chain is Probable cation-transporting P-type ATPase (pacL), found in Mycoplasma genitalium (strain ATCC 33530 / DSM 19775 / NCTC 10195 / G37) (Mycoplasmoides genitalium).